The sequence spans 137 residues: Large ribosomal subunit protein uL16 (137 aa).

Belongs to the universal ribosomal protein uL16 family. As to quaternary structure, part of the 50S ribosomal subunit.

Binds 23S rRNA and is also seen to make contacts with the A and possibly P site tRNAs. The sequence is that of Large ribosomal subunit protein uL16 from Bradyrhizobium sp. (strain ORS 278).